The sequence spans 347 residues: NADH-ubiquinone oxidoreductase chain 2 (347 aa).

Helical transmembrane passes span 3–23 (PLIL…VMMS), 25–45 (HWLM…PLLM), 59–79 (YFLT…INLL), 96–116 (IIMT…FWVP), 148–170 (GINL…WGGL), 178–198 (ILAY…AFNP), 200–220 (MTLL…MLFM), 247–267 (IMLS…WMII), 276–296 (ITLA…YMRL), and 326–346 (LPML…ITLL).

Belongs to the complex I subunit 2 family. In terms of assembly, core subunit of respiratory chain NADH dehydrogenase (Complex I) which is composed of 45 different subunits. Interacts with TMEM242.

It is found in the mitochondrion inner membrane. The enzyme catalyses a ubiquinone + NADH + 5 H(+)(in) = a ubiquinol + NAD(+) + 4 H(+)(out). Core subunit of the mitochondrial membrane respiratory chain NADH dehydrogenase (Complex I) which catalyzes electron transfer from NADH through the respiratory chain, using ubiquinone as an electron acceptor. Essential for the catalytic activity and assembly of complex I. The protein is NADH-ubiquinone oxidoreductase chain 2 of Saccopteryx leptura (Lesser sac-winged bat).